The following is a 196-amino-acid chain: FMN-dependent NADH:quinone oxidoreductase (196 aa).

S10 contacts FMN.

Belongs to the azoreductase type 1 family. In terms of assembly, homodimer. Requires FMN as cofactor.

The enzyme catalyses 2 a quinone + NADH + H(+) = 2 a 1,4-benzosemiquinone + NAD(+). The catalysed reaction is N,N-dimethyl-1,4-phenylenediamine + anthranilate + 2 NAD(+) = 2-(4-dimethylaminophenyl)diazenylbenzoate + 2 NADH + 2 H(+). Its function is as follows. Quinone reductase that provides resistance to thiol-specific stress caused by electrophilic quinones. In terms of biological role, also exhibits azoreductase activity. Catalyzes the reductive cleavage of the azo bond in aromatic azo compounds to the corresponding amines. In Cereibacter sphaeroides (strain KD131 / KCTC 12085) (Rhodobacter sphaeroides), this protein is FMN-dependent NADH:quinone oxidoreductase.